Consider the following 130-residue polypeptide: Ribosome-binding factor A (130 aa).

It belongs to the RbfA family. Monomer. Binds 30S ribosomal subunits, but not 50S ribosomal subunits or 70S ribosomes.

The protein localises to the cytoplasm. In terms of biological role, one of several proteins that assist in the late maturation steps of the functional core of the 30S ribosomal subunit. Associates with free 30S ribosomal subunits (but not with 30S subunits that are part of 70S ribosomes or polysomes). Required for efficient processing of 16S rRNA. May interact with the 5'-terminal helix region of 16S rRNA. The sequence is that of Ribosome-binding factor A from Pseudomonas aeruginosa (strain LESB58).